The chain runs to 525 residues: Membrane-bound lytic murein transglycosylase F (525 aa).

Positions 1–24 are cleaved as a signal peptide; it reads MQIRHFNRLKRSVLLFASVLLLSA. The segment at 25–284 is non-LT domain; the sequence is CQIESQPKSE…SLEEKYIGHI (260 aa). Positions 286 to 525 are LT domain; sequence AFDYVDTRAF…VDEDLDQEEE (240 aa). Residue Glu329 is part of the active site. Residues 506–525 are disordered; sequence VSGASDITNEVDEDLDQEEE. A compositionally biased stretch (acidic residues) spans 514-525; sequence NEVDEDLDQEEE.

This sequence in the N-terminal section; belongs to the bacterial solute-binding protein 3 family. In the C-terminal section; belongs to the transglycosylase Slt family.

The protein resides in the cell outer membrane. The enzyme catalyses Exolytic cleavage of the (1-&gt;4)-beta-glycosidic linkage between N-acetylmuramic acid (MurNAc) and N-acetylglucosamine (GlcNAc) residues in peptidoglycan, from either the reducing or the non-reducing ends of the peptidoglycan chains, with concomitant formation of a 1,6-anhydrobond in the MurNAc residue.. Functionally, murein-degrading enzyme that degrades murein glycan strands and insoluble, high-molecular weight murein sacculi, with the concomitant formation of a 1,6-anhydromuramoyl product. Lytic transglycosylases (LTs) play an integral role in the metabolism of the peptidoglycan (PG) sacculus. Their lytic action creates space within the PG sacculus to allow for its expansion as well as for the insertion of various structures such as secretion systems and flagella. The protein is Membrane-bound lytic murein transglycosylase F of Vibrio parahaemolyticus serotype O3:K6 (strain RIMD 2210633).